The following is an 853-amino-acid chain: Vacuolar protein sorting-associated protein 41 homolog (853 aa).

Over residues 1 to 25 (MAEAEEQETESLEESTDESEEESEE) the composition is skewed to acidic residues. Residues 1–32 (MAEAEEQETESLEESTDESEEESEEEPKLKYE) form a disordered region. Residues 1-539 (MAEAEEQETE…YLTLRHKDVF (539 aa)) form an interaction with ARL8B region. One copy of the CHCR repeat lies at 567–711 (VDMLLDNEDK…SIDKPPFITG (145 aa)). The segment at 790-838 (CESCLSPILPTDAAKPFSVVVFHCRHMFHKECLPMPSMNAPAQYCNICS) adopts an RING-type; atypical zinc-finger fold.

It belongs to the VPS41 family. In terms of assembly, component of the putative homotypic fusion and vacuole protein sorting (HOPS) complex; the core of which composed of the class C Vps proteins VPS11, VPS16, VPS18 and VPS33A, is associated with VPS39 and VPS41. Interacts with RILP, MON1B. Interacts with ARL8B (GTP-bound form); involved in recruitment to lysosomes and probably hierarchial assembly of the HOPS complex at lysosomal membranes. In vitro can self-assemble into a lattice. Associates with adapter protein complex 3 (AP-3) and clathrin:AP-3 complexes. Interacts with STX17; this interaction is increased in the absence of TMEM39A. Interacts with ARL8B and PLEKHM1; the interaction mediates the recruitment of the HOPS complex to lysosomes. Interacts with RAB7, RAB2A and RAB2B. Interacts with RAB39A (GTP-bound) and RAB39B (GTP-bound); interaction with RAB39A leads to a functional HOPS complex that mediates autophagosome-lysosome membrane tethering.

The protein resides in the endosome membrane. It is found in the late endosome membrane. It localises to the early endosome membrane. The protein localises to the lysosome membrane. Its subcellular location is the golgi apparatus. The protein resides in the trans-Golgi network. It is found in the cytoplasmic vesicle. It localises to the clathrin-coated vesicle. The protein localises to the cytoplasm. Its subcellular location is the cytosol. Plays a role in vesicle-mediated protein trafficking to lysosomal compartments including the endocytic membrane transport and autophagic pathways. Believed to act in part as a core component of the putative HOPS endosomal tethering complex is proposed to be involved in the Rab5-to-Rab7 endosome conversion probably implicating MON1A/B, and via binding SNAREs and SNARE complexes to mediate tethering and docking events during SNARE-mediated membrane fusion. The HOPS complex is proposed to be recruited to Rab7 on the late endosomal membrane and to regulate late endocytic, phagocytic and autophagic traffic towards lysosomes. Involved in homotypic vesicle fusions between late endosomes and in heterotypic fusions between late endosomes and lysosomes implicated in degradation of endocytosed cargo. Required for fusion of autophagosomes with lysosomes. Links the HOPS complex to endosomal via its association with RILP and to lysosomal membranes via its association with ARL8B, suggesting that these interactions may bring the compartments to close proximity for fusion. Involved in the direct trans-Golgi network to late endosomes transport of lysosomal membrane proteins independently of HOPS. Involved in sorting to the regulated secretory pathway presumably implicating the AP-3 adapter complex. May play a role in HOPS-independent function in the regulated secretory pathway. The polypeptide is Vacuolar protein sorting-associated protein 41 homolog (Vps41) (Mus musculus (Mouse)).